We begin with the raw amino-acid sequence, 364 residues long: Paraneoplastic antigen Ma2 homolog (364 aa).

Residue Ala-2 is modified to N-acetylalanine. Residues 335–353 (EEEEASFENESIEEPEEGD) are compositionally biased toward acidic residues. The segment at 335-364 (EEEEASFENESIEEPEEGDGYGGWNHEGDD) is disordered. Residues 354–364 (GYGGWNHEGDD) are compositionally biased toward gly residues.

Belongs to the PNMA family.

The protein resides in the nucleus. It is found in the nucleolus. This is Paraneoplastic antigen Ma2 homolog (PNMA2) from Macaca fascicularis (Crab-eating macaque).